We begin with the raw amino-acid sequence, 246 residues long: MIAALLPSWAVTEHAFTDAPDDPVSLLFPEEAAHVARAVPKRLHEFATVRVCARAALGRLGLPPGPLLPGRRGAPSWPDGVVGSMTHCQGFRGAAVARAADAASLGIDAEPNGPLPDGVLAMVSLPSEREWLAGLAARRPDVHWDRLLFSAKESVFKAWYPLTGLELDFDEAELAVDPDAGTFTARLLVPGPVVGGRRLDGFEGRWAAGEGLVVTAIAVAAPAGTAEESAEGAGKEATADDRTAVP.

The span at 223-232 (AGTAEESAEG) shows a compositional bias: low complexity. Positions 223–246 (AGTAEESAEGAGKEATADDRTAVP) are disordered. A compositionally biased stretch (basic and acidic residues) spans 233 to 246 (AGKEATADDRTAVP).

The protein belongs to the P-Pant transferase superfamily. Gsp/Sfp/HetI/AcpT family.

It carries out the reaction apo-[ACP] + CoA = holo-[ACP] + adenosine 3',5'-bisphosphate + H(+). Transfers the 4'-phosphopantetheine moiety from coenzyme A to a Ser of an acyl-carrier-protein. The enzyme is able to transfer the cofactor to a broad range of enzymes with acyl- or peptidyl-carrier protein domains. This is 4'-phosphopantetheinyl transferase Svp (svp) from Streptomyces mobaraensis (Streptoverticillium mobaraense).